A 133-amino-acid polypeptide reads, in one-letter code: Global transcriptional regulator Spx (133 aa).

A disulfide bond links Cys10 and Cys13.

It belongs to the ArsC family. Spx subfamily. As to quaternary structure, interacts with the C-terminal domain of the alpha subunit of the RNAP.

It is found in the cytoplasm. Its function is as follows. Global transcriptional regulator that plays a key role in stress response and exerts either positive or negative regulation of genes. Acts by interacting with the C-terminal domain of the alpha subunit of the RNA polymerase (RNAP). This interaction can enhance binding of RNAP to the promoter region of target genes and stimulate their transcription, or block interaction of RNAP with activator. This is Global transcriptional regulator Spx from Streptococcus pneumoniae serotype 4 (strain ATCC BAA-334 / TIGR4).